Reading from the N-terminus, the 848-residue chain is Leucine--tRNA ligase (848 aa).

The disordered stretch occupies residues 1–21 (MTENTPGTSAPERFDPATADT). The short motif at 51–61 (PYPSGRIHIGH) is the 'HIGH' region element. Positions 625-629 (KMSKS) match the 'KMSKS' region motif. Lys-628 lines the ATP pocket.

The protein belongs to the class-I aminoacyl-tRNA synthetase family.

It is found in the cytoplasm. It catalyses the reaction tRNA(Leu) + L-leucine + ATP = L-leucyl-tRNA(Leu) + AMP + diphosphate. The sequence is that of Leucine--tRNA ligase from Novosphingobium aromaticivorans (strain ATCC 700278 / DSM 12444 / CCUG 56034 / CIP 105152 / NBRC 16084 / F199).